The primary structure comprises 347 residues: NADH-ubiquinone oxidoreductase chain 2 (347 aa).

The next 10 helical transmembrane spans lie at 3–23, 26–46, 67–87, 96–116, 149–169, 178–198, 200–220, 239–259, 274–294, and 325–345; these read PLIF…TMIS, WLLI…IIMM, SMLL…WTIM, YMMT…FWVP, LNLN…GWGG, IMAY…MYNT, LMML…ALFI, ILTT…PLSG, NMLL…YFYM, and LSPT…MMLI.

This sequence belongs to the complex I subunit 2 family. As to quaternary structure, core subunit of respiratory chain NADH dehydrogenase (Complex I) which is composed of 45 different subunits. Interacts with TMEM242.

It is found in the mitochondrion inner membrane. The enzyme catalyses a ubiquinone + NADH + 5 H(+)(in) = a ubiquinol + NAD(+) + 4 H(+)(out). Its function is as follows. Core subunit of the mitochondrial membrane respiratory chain NADH dehydrogenase (Complex I) which catalyzes electron transfer from NADH through the respiratory chain, using ubiquinone as an electron acceptor. Essential for the catalytic activity and assembly of complex I. The sequence is that of NADH-ubiquinone oxidoreductase chain 2 from Dasypus novemcinctus (Nine-banded armadillo).